Reading from the N-terminus, the 84-residue chain is ATP synthase subunit c (84 aa).

2 helical membrane passes run 9 to 29 (IIGASLLLAFAALGTAIGFAI) and 54 to 74 (IVAGLLDAIAMIAVGISLLFI).

The protein belongs to the ATPase C chain family. F-type ATPases have 2 components, F(1) - the catalytic core - and F(0) - the membrane proton channel. F(1) has five subunits: alpha(3), beta(3), gamma(1), delta(1), epsilon(1). F(0) has three main subunits: a(1), b(2) and c(10-14). The alpha and beta chains form an alternating ring which encloses part of the gamma chain. F(1) is attached to F(0) by a central stalk formed by the gamma and epsilon chains, while a peripheral stalk is formed by the delta and b chains.

The protein resides in the cell inner membrane. In terms of biological role, f(1)F(0) ATP synthase produces ATP from ADP in the presence of a proton or sodium gradient. F-type ATPases consist of two structural domains, F(1) containing the extramembraneous catalytic core and F(0) containing the membrane proton channel, linked together by a central stalk and a peripheral stalk. During catalysis, ATP synthesis in the catalytic domain of F(1) is coupled via a rotary mechanism of the central stalk subunits to proton translocation. Functionally, key component of the F(0) channel; it plays a direct role in translocation across the membrane. A homomeric c-ring of between 10-14 subunits forms the central stalk rotor element with the F(1) delta and epsilon subunits. The sequence is that of ATP synthase subunit c from Haemophilus ducreyi (strain 35000HP / ATCC 700724).